A 171-amino-acid chain; its full sequence is Translationally-controlled tumor protein homolog (171 aa).

The 171-residue stretch at 1–171 (MIIYKDIITG…FKDGLEIEKC (171 aa)) folds into the TCTP domain.

Belongs to the TCTP family.

It localises to the cytoplasm. Involved in calcium binding and microtubule stabilization. In Labeo rohita (Indian major carp), this protein is Translationally-controlled tumor protein homolog (tpt1).